The primary structure comprises 1146 residues: Error-prone DNA polymerase (1146 aa).

Disordered regions lie at residues 1–43 (MGWG…WSRK) and 154–178 (ATPE…PPGP). Residues 12 to 26 (ELERVLSGRPGRTDP) are compositionally biased toward basic and acidic residues.

Belongs to the DNA polymerase type-C family. DnaE2 subfamily.

The protein resides in the cytoplasm. The catalysed reaction is DNA(n) + a 2'-deoxyribonucleoside 5'-triphosphate = DNA(n+1) + diphosphate. In terms of biological role, DNA polymerase involved in damage-induced mutagenesis and translesion synthesis (TLS). It is not the major replicative DNA polymerase. The chain is Error-prone DNA polymerase from Nocardia farcinica (strain IFM 10152).